The sequence spans 158 residues: Transcriptional repressor NrdR (158 aa).

Residues 3 to 34 fold into a zinc finger; it reads CPFCGSLDTQVIDSRANEAGDAIRRRRRCAAC. Residues 49–139 form the ATP-cone domain; it reads PQIVKTNGTR…VYKSFKDPDD (91 aa).

Belongs to the NrdR family. Requires Zn(2+) as cofactor.

Functionally, negatively regulates transcription of bacterial ribonucleotide reductase nrd genes and operons by binding to NrdR-boxes. The sequence is that of Transcriptional repressor NrdR from Thiobacillus denitrificans (strain ATCC 25259 / T1).